The sequence spans 406 residues: Tyrosine--tRNA ligase (406 aa).

Tyrosine 35 is an L-tyrosine binding site. The 'HIGH' region signature appears at 40-49 (ATSASLHIGH). Residues tyrosine 167 and glutamine 171 each coordinate L-tyrosine. A 'KMSKS' region motif is present at residues 227 to 231 (KMGKS). Lysine 230 provides a ligand contact to ATP. One can recognise an S4 RNA-binding domain in the interval 341–405 (ILLVDLMVLA…IGKKKILRIV (65 aa)).

Belongs to the class-I aminoacyl-tRNA synthetase family. TyrS type 1 subfamily. Homodimer.

The protein localises to the cytoplasm. The catalysed reaction is tRNA(Tyr) + L-tyrosine + ATP = L-tyrosyl-tRNA(Tyr) + AMP + diphosphate + H(+). Its function is as follows. Catalyzes the attachment of tyrosine to tRNA(Tyr) in a two-step reaction: tyrosine is first activated by ATP to form Tyr-AMP and then transferred to the acceptor end of tRNA(Tyr). This Borrelia duttonii (strain Ly) protein is Tyrosine--tRNA ligase.